The sequence spans 508 residues: Histidine ammonia-lyase (508 aa).

Positions 145–147 (ASG) form a cross-link, 5-imidazolinone (Ala-Gly). Ser146 is modified (2,3-didehydroalanine (Ser)).

Belongs to the PAL/histidase family. Post-translationally, contains an active site 4-methylidene-imidazol-5-one (MIO), which is formed autocatalytically by cyclization and dehydration of residues Ala-Ser-Gly.

Its subcellular location is the cytoplasm. The catalysed reaction is L-histidine = trans-urocanate + NH4(+). It functions in the pathway amino-acid degradation; L-histidine degradation into L-glutamate; N-formimidoyl-L-glutamate from L-histidine: step 1/3. The chain is Histidine ammonia-lyase from Myxococcus xanthus (strain DK1622).